The following is a 401-amino-acid chain: MLRGTYLFGYAFFFTVGIIHISTGSLTPFLLEAFNKTTDDISVIIFFQFTGFLSGVLIAPLMIKKYSHFRTLTLALTIMLVALSIFFLTKDWYYIIVMAFLLGYGAGTLETTVGSFVIANFESNAEKMSKLEVLFGLGALSFPLLINSFIDINNWFLPYYCIFTFLFVLFVGWLIFLSKNREYAKNANQQVTFPDGGAFQYFIGDRKKSKQLGFFVFFAFLYAGIETNFANFLPSIMINQDNEQISLISVSFFWVGIIIGRILIGFVSRRLDFSKYLLFSCSCLIVLLIAFSYISNPILQLSGTFLIGLSIAGIFPIALTLASIIIQKYVDEVTSLFIASASFGGAIISFLIGWSLNQDTILLTMGIFTTMAVILVGISVKIRRTKTEDPISLENKASKTQ.

12 helical membrane passes run 11–31 (AFFF…PFLL), 43–63 (VIIF…PLMI), 78–98 (IMLV…IIVM), 99–119 (AFLL…FVIA), 132–152 (EVLF…FIDI), 156–176 (FLPY…WLIF), 212–232 (LGFF…FANF), 247–267 (LISV…IGFV), 278–298 (LFSC…SNPI), 306–326 (LIGL…SIII), 336–356 (LFIA…GWSL), and 360–380 (TILL…GISV).

The protein belongs to the major facilitator superfamily.

It is found in the cell membrane. Functionally, can transport glucose, mannose, 2-deoxyglucose and methyl alpha-glucoside, but not galactose. The chain is Glucose/mannose transporter GlcP (glcP) from Bacillus subtilis (strain 168).